Reading from the N-terminus, the 346-residue chain is Nuclear distribution protein nudE-like 1 (346 aa).

A coiled-coil region spans residues 13-190; sequence KEEIVYWREL…LAVRERQTNG (178 aa). 2 disordered regions span residues 184–205 and 325–346; these read RERQTNGTRKSAPSSPTLDCDK and YDPPGVLGSRPPSPPGMLPLSV. Residues 188–200 are compositionally biased toward polar residues; the sequence is TNGTRKSAPSSPT. The span at 335–346 shows a compositional bias: pro residues; the sequence is PPSPPGMLPLSV.

The protein belongs to the nudE family. In terms of processing, phosphorylated in mitosis.

The protein resides in the cytoplasm. It is found in the cytoskeleton. It localises to the microtubule organizing center. The protein localises to the centrosome. Its subcellular location is the spindle. Required for organization of the cellular microtubule array and microtubule anchoring at the centrosome. Positively regulates the activity of the minus-end directed microtubule motor protein dynein. May enhance dynein-mediated microtubule sliding by targeting dynein to the microtubule plus end. Positively regulates lysosome peripheral distribution and ruffled border formation in osteoclasts. This Xenopus tropicalis (Western clawed frog) protein is Nuclear distribution protein nudE-like 1 (ndel1).